Reading from the N-terminus, the 88-residue chain is Enticin (88 aa).

The first 19 residues, 1-19, serve as a signal peptide directing secretion; the sequence is MKTALPLLLLTCLVAAVQS. 3 disulfide bridges follow: Cys25/Cys33, Cys40/Cys52, and Cys59/Cys67. Residues 69-88 constitute a propeptide that is removed on maturation; it reads REQSQLNHDHLNNHTTTQQP.

In terms of assembly, binds to attractin and temptin.

Its subcellular location is the secreted. In terms of biological role, a component of the complex of water-borne protein pheromones that stimulates attraction and mating behavior. This chain is Enticin, found in Aplysia californica (California sea hare).